A 452-amino-acid chain; its full sequence is Rhodopsin (452 aa).

At 1–33 the chain is on the extracellular side; the sequence is MGRDIPDNETWWYNPYMDIHPHWKQFDQVPAAV. N-linked (GlcNAc...) asparagine glycosylation is present at asparagine 8. A helical membrane pass occupies residues 34–58; sequence YYSLGIFIAICGIIGCVGNGVVIYL. At 59–70 the chain is on the cytoplasmic side; the sequence is FTKTKSLQTPAN. The chain crosses the membrane as a helical span at residues 71 to 97; it reads MFIINLAFSDFTFSLVNGFPLMTISCF. At 98–109 the chain is on the extracellular side; the sequence is MKYWVFGNAACK. A disulfide bridge connects residues cysteine 108 and cysteine 186. A helical transmembrane segment spans residues 110 to 131; sequence VYGLIGGIFGLMSIMTMTMISI. Positions 132-134 match the 'Ionic lock' involved in activated form stabilization motif; it reads DRY. Over 132–151 the chain is Cytoplasmic; sequence DRYNVIGRPMSASKKMSHRK. The helical transmembrane segment at 152–172 threads the bilayer; sequence AFIMIIFVWIWSTIWAIGPIF. Residues 173–199 lie on the Extracellular side of the membrane; it reads GWGAYTLEGVLCNCSFDYITRDTTTRS. A helical membrane pass occupies residues 200-224; it reads NILCMYIFAFMCPIVVIFFCYFNIV. The Cytoplasmic portion of the chain corresponds to 225–261; that stretch reads MSVSNHEKEMAAMAKRLNAKELRKAQAGANAEMKLAK. A helical transmembrane segment spans residues 262-283; sequence ISIVIVTQFLLSWSPYAVVALL. Topologically, residues 284-293 are extracellular; it reads AQFGPIEWVT. A helical transmembrane segment spans residues 294-315; sequence PYAAQLPVMFAKASAIHNPMIY. N6-(retinylidene)lysine is present on lysine 305. Residues 316 to 452 lie on the Cytoplasmic side of the membrane; that stretch reads SVSHPKFRER…QGVDNQAYQA (137 aa). Residues cysteine 336 and cysteine 337 are each lipidated (S-palmitoyl cysteine). Disordered stretches follow at residues 346–365 and 376–452; these read DDKD…GETA and MMQK…AYQA. The span at 376–388 shows a compositional bias: low complexity; it reads MMQKMQAQQQQQP. The span at 389 to 440 shows a compositional bias: pro residues; it reads AYPPQGYPPQGYPPPPPQGYPPQGYPPQGYPPQGYPPPPQGPPPQGPPPQAA.

It belongs to the G-protein coupled receptor 1 family. Opsin subfamily. Contains one covalently linked retinal chromophore. Upon light absorption, the covalently bound 11-cis-retinal is converted to all-trans-retinal. After hydrolysis of the Schiff base and release of the covalently bound all-trans-retinal, active rhodopsin is regenerated by binding of a fresh molecule of 11-cis-retinal.

Its subcellular location is the cell projection. It localises to the rhabdomere membrane. Its function is as follows. Photoreceptor required for image-forming vision at low light intensity. Light-induced isomerization of 11-cis to all-trans retinal triggers a conformational change that activates signaling via G-proteins. Signaling mediates the activation of phospholipase C. Subsequent receptor phosphorylation mediates displacement of the bound G-protein alpha subunit by arrestin and terminates signaling. This is Rhodopsin (RHO) from Loligo forbesii (Veined squid).